A 271-amino-acid chain; its full sequence is 2-dehydro-3-deoxyphosphooctonate aldolase (271 aa).

The protein belongs to the KdsA family.

The protein resides in the cytoplasm. The enzyme catalyses D-arabinose 5-phosphate + phosphoenolpyruvate + H2O = 3-deoxy-alpha-D-manno-2-octulosonate-8-phosphate + phosphate. It participates in carbohydrate biosynthesis; 3-deoxy-D-manno-octulosonate biosynthesis; 3-deoxy-D-manno-octulosonate from D-ribulose 5-phosphate: step 2/3. The protein operates within bacterial outer membrane biogenesis; lipopolysaccharide biosynthesis. This chain is 2-dehydro-3-deoxyphosphooctonate aldolase, found in Campylobacter jejuni subsp. jejuni serotype O:6 (strain 81116 / NCTC 11828).